The primary structure comprises 356 residues: Histidinol-phosphate aminotransferase (356 aa).

Lysine 214 carries the post-translational modification N6-(pyridoxal phosphate)lysine.

Belongs to the class-II pyridoxal-phosphate-dependent aminotransferase family. Histidinol-phosphate aminotransferase subfamily. As to quaternary structure, homodimer. It depends on pyridoxal 5'-phosphate as a cofactor.

The catalysed reaction is L-histidinol phosphate + 2-oxoglutarate = 3-(imidazol-4-yl)-2-oxopropyl phosphate + L-glutamate. It functions in the pathway amino-acid biosynthesis; L-histidine biosynthesis; L-histidine from 5-phospho-alpha-D-ribose 1-diphosphate: step 7/9. In Escherichia coli O9:H4 (strain HS), this protein is Histidinol-phosphate aminotransferase.